The following is a 212-amino-acid chain: Thymidylate kinase (212 aa).

10–17 (GLEGAGKT) is an ATP binding site.

Belongs to the thymidylate kinase family.

The enzyme catalyses dTMP + ATP = dTDP + ADP. Phosphorylation of dTMP to form dTDP in both de novo and salvage pathways of dTTP synthesis. This chain is Thymidylate kinase, found in Yersinia pestis bv. Antiqua (strain Antiqua).